The following is a 696-amino-acid chain: DEAD-box ATP-dependent RNA helicase 7 (696 aa).

A disordered region spans residues Met1–Ala116. Residues Glu16–Asp97 adopt a coiled-coil conformation. Residues Lys27–Arg38 are compositionally biased toward basic and acidic residues. Residues Lys39 to Ala49 are compositionally biased toward basic residues. Over residues Ser67–Ala77 the composition is skewed to low complexity. The segment covering Glu92–Ala112 has biased composition (acidic residues). Positions Asn115–Ala143 match the Q motif motif. Positions Phe146–Thr328 constitute a Helicase ATP-binding domain. Ala159 to Thr166 contributes to the ATP binding site. Residues Asp274–Asp277 carry the DEAD box motif. The Helicase C-terminal domain maps to Gln357–Ala500. The segment at Leu641 to Tyr696 is disordered. Residues Gly652 to Asn690 show a composition bias toward gly residues.

It belongs to the DEAD box helicase family. DDX21/DDX50 subfamily.

It is found in the nucleus. It catalyses the reaction ATP + H2O = ADP + phosphate + H(+). This Oryza sativa subsp. japonica (Rice) protein is DEAD-box ATP-dependent RNA helicase 7.